We begin with the raw amino-acid sequence, 1259 residues long: Bud site selection protein 4 homolog (1259 aa).

Disordered regions lie at residues 185–416, 428–455, and 862–902; these read YDRG…MVKP, LHLG…DAMK, and SGLG…KKRT. Residues 247–267 show a composition bias toward basic and acidic residues; sequence ATDKRSLTDKTVPDNRGENER. The span at 277–289 shows a compositional bias: polar residues; sequence RNPSIETGTTDEY. Basic and acidic residues-rich tracts occupy residues 305 to 324 and 368 to 391; these read DDSK…KPQR and IRDR…DHEL. A compositionally biased stretch (low complexity) spans 397-411; the sequence is SARTNSSASGNSSDS. In terms of domain architecture, PH spans 1128-1239; sequence AIAMEGFMWQ…WIEKLRKVIE (112 aa).

It belongs to the BUD4 family.

It is found in the cell septum. In terms of biological role, may be involved in the septin organization at the site of septation. The sequence is that of Bud site selection protein 4 homolog (BUD4) from Eremothecium gossypii (strain ATCC 10895 / CBS 109.51 / FGSC 9923 / NRRL Y-1056) (Yeast).